We begin with the raw amino-acid sequence, 521 residues long: Protein PLM2 (521 aa).

Positions 1–63 (MSHLFPPSSP…SIGRQSSPVK (63 aa)) are disordered. Residues 51 to 63 (PSSSIGRQSSPVK) are compositionally biased toward polar residues. An FHA domain is found at 102–156 (LAIGRKKSVCNIILPCRKNISRQHAFISYAADRNEIKLECNGTNGLSVHLPYSMQ). A phosphoserine mark is found at Ser281, Ser295, Ser302, and Ser384.

This sequence belongs to the PLM2/TOS4 family. Post-translationally, phosphorylated by CDC28.

The protein localises to the nucleus. Its function is as follows. Binds to the promoters of genes with functions important for the G1/S (start) transition; primarily genes involved in DNA synthesis and repair, chromosome segregation, nuclear division and transcription. This Saccharomyces cerevisiae (strain ATCC 204508 / S288c) (Baker's yeast) protein is Protein PLM2 (PLM2).